Reading from the N-terminus, the 37-residue chain is Potassium channel toxin alpha-KTx 4.3 (37 aa).

3 cysteine pairs are disulfide-bonded: C7/C28, C13/C33, and C17/C35. Positions 26–33 (GKCMNGKC) are interaction with Ca(2+)-activated K(+) channels.

As to expression, expressed by the venom gland.

The protein resides in the secreted. Blocks reversibly Shaker B potassium-channels. This is Potassium channel toxin alpha-KTx 4.3 from Tityus discrepans (Venezuelan scorpion).